Here is a 75-residue protein sequence, read N- to C-terminus: Small ribosomal subunit protein bS18 (75 aa).

Belongs to the bacterial ribosomal protein bS18 family. Part of the 30S ribosomal subunit. Forms a tight heterodimer with protein bS6.

Binds as a heterodimer with protein bS6 to the central domain of the 16S rRNA, where it helps stabilize the platform of the 30S subunit. The protein is Small ribosomal subunit protein bS18 of Cellvibrio japonicus (strain Ueda107) (Pseudomonas fluorescens subsp. cellulosa).